The sequence spans 1514 residues: MGTALVQRGGCCLLCLSLLLLGCWAELGSGLEFPGAEGQWTRFPKWNACCESEMSFQLKTRSARGLVLYFDDEGFCDFLELILTRGGRLQLSFSIFCAEPATLLADTPVNDGAWHSVRIRRQFRNTTLYIDRAEAKWVEVKSKRRDMTVFSGLFVGGLPPELRAAALKLTLASVREREPFKGWIRDVRVNSSQALPVDGGEVKLDDEPPNSGGGSPCEAGEEGEGGVCLNGGVCSVVDDQAVCDCSRTGFRGKDCSQEDNNVEGLAHLMMGDQGKSKGKEEYIATFKGSEYFCYDLSQNPIQSSSDEITLSFKTLQRNGLMLHTGKSADYVNLALKNGAVSLVINLGSGAFEALVEPVNGKFNDNAWHDVKVTRNLRQHSGIGHAMVNKLHCSVTISVDGILTTTGYTQEDYTMLGSDDFFYVGGSPSTADLPGSPVSNNFMGCLKEVVYKNNDVRLELSRLAKQGDPKMKIHGVVAFKCENVATLDPITFETPESFISLPKWNAKKTGSISFDFRTTEPNGLILFSHGKPRHQKDAKHPQMIKVDFFAIEMLDGHLYLLLDMGSGTIKIKALQKKVNDGEWYHVDFQRDGRSGTISVNTLRTPYTAPGESEILDLDDELYLGGLPENKAGLVFPTEVWTALLNYGYVGCIRDLFIDGQSKDIRQMAEIQSTAGVKPSCSKETAKPCLSNPCKNNGMCRDGWNRYVCDCSGTGYLGRSCEREATVLSYDGSMFMKIQLPVVMHTEAEDVSLRFRSQRAYGILMATTSRDSADTLRLELDAGRVKLTVNLDCIRINCNSSKGPETLFAGYNLNDNEWHTVRVVRRGKSLKLTVDDQQAMTGQMAGDHTRLEFHNIETGIITERRYLSSVPSNFIGHLQSLTFNGMAYIDLCKNGDIDYCELNARFGFRNIIADPVTFKTKSSYVALATLQAYTSMHLFFQFKTTSLDGLILYNSGDGNDFIVVELVKGYLHYVFDLGNGANLIKGSSNKPLNDNQWHNVMISRDTSNLHTVKIDTKITTQITAGARNLDLKSDLYIGGVAKETYKSLPKLVHAKEGFQGCLASVDLNGRLPDLISDALFCNGQIERGCEGPSTTCQEDSCSNQGVCLQQWDGFSCDCSMTSFSGPLCNDPGTTYIFSKGGGQITYKWPPNDRPSTRADRLAIGFSTVQKEAVLVRVDSSSGLGDYLELHIHQGKIGVKFNVGTDDIAIEESNAIINDGKYHVVRFTRSGGNATLQVDSWPVIERYPAGNNDNERLAIARQRIPYRLGRVVDEWLLDKGRQLTIFNSQATIIIGGKEQGQPFQGQLSGLYYNGLKVLNMAAENDANIAIVGNVRLVGEVPSSMTTESTATAMQSEMSTSIMETTTTLATSTARRGKPPTKEPISQTTDDILVASAECPSDDEDIDPCEPSSGGLANPTRVGGREPYPGSAEVIRESSSTTGMVVGIVAAAALCILILLYAMYKYRNRDEGSYHVDESRNYISNSAQSNGAVVKEKQPSSAKSANKNKKNKDKEYYV.

The first 30 residues, 1 to 30 (MGTALVQRGGCCLLCLSLLLLGCWAELGSG), serve as a signal peptide directing secretion. In terms of domain architecture, Laminin G-like 1 spans 31–217 (LEFPGAEGQW…PPNSGGGSPC (187 aa)). The Extracellular portion of the chain corresponds to 31-1438 (LEFPGAEGQW…EVIRESSSTT (1408 aa)). N-linked (GlcNAc...) asparagine glycans are attached at residues asparagine 125 and asparagine 190. Residues 197–221 (VDGGEVKLDDEPPNSGGGSPCEAGE) are disordered. Residues 219-256 (AGEEGEGGVCLNGGVCSVVDDQAVCDCSRTGFRGKDCS) form the EGF-like 1 domain. Disulfide bonds link cysteine 228–cysteine 243 and cysteine 245–cysteine 255. Laminin G-like domains follow at residues 283–480 (IATF…AFKC) and 487–679 (DPIT…KPSC). Ca(2+)-binding residues include aspartate 329, leucine 346, and methionine 414. Disulfide bonds link cysteine 444/cysteine 480, cysteine 650/cysteine 679, cysteine 687/cysteine 698, cysteine 692/cysteine 707, and cysteine 709/cysteine 719. Residues 683 to 720 (TAKPCLSNPCKNNGMCRDGWNRYVCDCSGTGYLGRSCE) enclose the EGF-like 2 domain. Laminin G-like domains are found at residues 725 to 898 (VLSY…IDYC) and 912 to 1087 (DPVT…ERGC). Aspartate 772 and leucine 789 together coordinate Ca(2+). Residue asparagine 797 is glycosylated (N-linked (GlcNAc...) asparagine). Residue arginine 848 participates in Ca(2+) binding. Cystine bridges form between cysteine 890–cysteine 898, cysteine 1059–cysteine 1087, cysteine 1094–cysteine 1105, cysteine 1099–cysteine 1114, and cysteine 1116–cysteine 1126. In terms of domain architecture, EGF-like 3 spans 1090–1127 (PSTTCQEDSCSNQGVCLQQWDGFSCDCSMTSFSGPLCN). Residues 1133-1331 (YIFSKGGGQI…DANIAIVGNV (199 aa)) enclose the Laminin G-like 6 domain. Residues aspartate 1183 and valine 1200 each coordinate Ca(2+). N-linked (GlcNAc...) asparagine glycosylation occurs at asparagine 1230. Residues isoleucine 1282 and asparagine 1284 each coordinate Ca(2+). An O-linked (Xyl...) (heparan sulfate) serine glycan is attached at serine 1392. Residues 1396–1427 (PSDDEDIDPCEPSSGGLANPTRVGGREPYPGS) are disordered. Residues 1439–1459 (GMVVGIVAAAALCILILLYAM) traverse the membrane as a helical segment. At 1460 to 1514 (YKYRNRDEGSYHVDESRNYISNSAQSNGAVVKEKQPSSAKSANKNKKNKDKEYYV) the chain is on the cytoplasmic side. An interaction with CASK region spans residues 1481 to 1507 (NSAQSNGAVVKEKQPSSAKSANKNKKN). Positions 1481-1514 (NSAQSNGAVVKEKQPSSAKSANKNKKNKDKEYYV) are disordered.

The protein belongs to the neurexin family. In terms of assembly, interacts (via laminin G-like domain 2 and/or laminin G-like domain 6) with NLGN1 forming a heterotetramer, where one NLGN1 dimer interacts with one NRXN1 dimer. Also interacts (via laminin G-like domain 2 and/or laminin G-like domain 6) with NLGN2, NLGN3 and NLGN4L; interactions with NLGN1, NLGN2, NLGN3 and NLGN4L are calcium-dependent. Interacts (via cytoplasmic C-terminal region) with CASK (via the PDZ, SH3 and guanylate kinase-like domains). Interacts (via cytoplasmic C-terminus) with CASKIN1 and APBA1. Interacts (via laminin G-like domain 2) with NXPH1 and NXPH3. Alpha-type isoforms (neurexin-1-alpha) interact (via laminin G-like domain 2 and/or laminin G-like domain 6) with DAG1 (via alpha-dystroglycan chain). Interacts with LRRTM1, LRRTM2, LRRTM3 and LRRTM4. Interacts with SYT13 and SYTL1. Interacts with CBLN1, CBLN2 and, less avidly, with CBLN4. Interacts with CLSTN3. Post-translationally, O-glycosylated; contains heparan sulfate. Heparan sulfate attachment is required for synapse development by mediating interactions with neuroligins and LRRTM2.

The protein resides in the presynaptic cell membrane. Its function is as follows. Cell surface protein involved in cell-cell-interactions, exocytosis of secretory granules and regulation of signal transmission. Function is isoform-specific. Alpha-type isoforms have a long N-terminus with six laminin G-like domains and play an important role in synaptic signal transmission. Alpha-type isoforms play a role in the regulation of calcium channel activity and Ca(2+)-triggered neurotransmitter release at synapses and at neuromuscular junctions. They play an important role in Ca(2+)-triggered exocytosis of secretory granules in pituitary gland. They may affect their functions at synapses and in endocrine cells via their interactions with proteins from the exocytotic machinery. Likewise, alpha-type isoforms play a role in regulating the activity of postsynaptic NMDA receptors, a subtype of glutamate-gated ion channels. Both alpha-type and beta-type isoforms may play a role in the formation or maintenance of synaptic junctions via their interactions (via the extracellular domains) with neuroligin family members, CBLN1 or CBLN2. In vitro, triggers the de novo formation of presynaptic structures. May be involved in specification of excitatory synapses. Alpha-type isoforms were first identified as receptors for alpha-latrotoxin from spider venom. This chain is Neurexin-1 (Nrxn1), found in Mus musculus (Mouse).